The chain runs to 118 residues: Large ribosomal subunit protein bL20 (118 aa).

The protein belongs to the bacterial ribosomal protein bL20 family.

Its function is as follows. Binds directly to 23S ribosomal RNA and is necessary for the in vitro assembly process of the 50S ribosomal subunit. It is not involved in the protein synthesizing functions of that subunit. In Caulobacter vibrioides (strain ATCC 19089 / CIP 103742 / CB 15) (Caulobacter crescentus), this protein is Large ribosomal subunit protein bL20.